The following is a 307-amino-acid chain: Putative F-box protein PP2-B6 (307 aa).

Residues H42–F88 form the F-box domain.

The sequence is that of Putative F-box protein PP2-B6 (PP2B6) from Arabidopsis thaliana (Mouse-ear cress).